Reading from the N-terminus, the 251-residue chain is Methionine aminopeptidase (251 aa).

Histidine 76 lines the substrate pocket. A divalent metal cation is bound by residues aspartate 93, aspartate 104, and histidine 168. Histidine 175 is a substrate binding site. Residues glutamate 202 and glutamate 233 each coordinate a divalent metal cation.

Belongs to the peptidase M24A family. Methionine aminopeptidase type 1 subfamily. Monomer. Co(2+) is required as a cofactor. Zn(2+) serves as cofactor. It depends on Mn(2+) as a cofactor. The cofactor is Fe(2+).

The enzyme catalyses Release of N-terminal amino acids, preferentially methionine, from peptides and arylamides.. Functionally, removes the N-terminal methionine from nascent proteins. The N-terminal methionine is often cleaved when the second residue in the primary sequence is small and uncharged (Met-Ala-, Cys, Gly, Pro, Ser, Thr, or Val). Requires deformylation of the N(alpha)-formylated initiator methionine before it can be hydrolyzed. In Staphylococcus epidermidis (strain ATCC 35984 / DSM 28319 / BCRC 17069 / CCUG 31568 / BM 3577 / RP62A), this protein is Methionine aminopeptidase.